The sequence spans 152 residues: UPF0266 membrane protein YobD (152 aa).

A run of 3 helical transmembrane segments spans residues 6 to 26 (LVLI…QFIM), 45 to 65 (IDSV…VTNH), and 67 to 87 (ALIT…IFWI).

This sequence belongs to the UPF0266 family.

Its subcellular location is the cell inner membrane. This chain is UPF0266 membrane protein YobD, found in Shigella dysenteriae serotype 1 (strain Sd197).